A 277-amino-acid chain; its full sequence is WRKY transcription factor 68 (277 aa).

A disordered region spans residues 51–96 (TPLMHFPTTPNSSSSEAVNGDDEEEEDGEEQQHKTKKRFKFTKMSR). Polar residues predominate over residues 58–67 (TTPNSSSSEA). The span at 69–79 (NGDDEEEEDGE) shows a compositional bias: acidic residues. Residues 84 to 96 (KTKKRFKFTKMSR) are compositionally biased toward basic residues. A DNA-binding region (WRKY) is located at residues 112–177 (SEVLHLDDGY…YEGQHTHPRP (66 aa)). The tract at residues 183 to 206 (KEGSSPSNGSASRAHIGLPTLPPQ) is disordered.

Belongs to the WRKY group II-c family.

The protein localises to the nucleus. In terms of biological role, transcription factor. Interacts specifically with the W box (5'-(T)TGAC[CT]-3'), a frequently occurring elicitor-responsive cis-acting element. This Arabidopsis thaliana (Mouse-ear cress) protein is WRKY transcription factor 68 (WRKY68).